The following is a 570-amino-acid chain: Sulfite reductase [NADPH] hemoprotein beta-component (570 aa).

Residues cysteine 434, cysteine 440, cysteine 479, and cysteine 483 each contribute to the [4Fe-4S] cluster site. Residue cysteine 483 participates in siroheme binding.

Belongs to the nitrite and sulfite reductase 4Fe-4S domain family. As to quaternary structure, alpha(8)-beta(8). The alpha component is a flavoprotein, the beta component is a hemoprotein. Siroheme serves as cofactor. It depends on [4Fe-4S] cluster as a cofactor.

The catalysed reaction is hydrogen sulfide + 3 NADP(+) + 3 H2O = sulfite + 3 NADPH + 4 H(+). The protein operates within sulfur metabolism; hydrogen sulfide biosynthesis; hydrogen sulfide from sulfite (NADPH route): step 1/1. Its function is as follows. Component of the sulfite reductase complex that catalyzes the 6-electron reduction of sulfite to sulfide. This is one of several activities required for the biosynthesis of L-cysteine from sulfate. This is Sulfite reductase [NADPH] hemoprotein beta-component from Enterobacter sp. (strain 638).